A 220-amino-acid polypeptide reads, in one-letter code: Putative glutathione S-transferase C460.02c (220 aa).

Positions 1 to 81 (MFLGTIYSFK…YFYEKGKHND (81 aa)) constitute a GST N-terminal domain. The 128-residue stretch at 89-216 (NEIEEAEMLK…YPLELPLTVT (128 aa)) folds into the GST C-terminal domain.

The protein belongs to the GST superfamily.

It is found in the cytoplasm. It catalyses the reaction RX + glutathione = an S-substituted glutathione + a halide anion + H(+). Functionally, involved in the oxidative stress response and detoxification. In Schizosaccharomyces pombe (strain 972 / ATCC 24843) (Fission yeast), this protein is Putative glutathione S-transferase C460.02c.